A 141-amino-acid chain; its full sequence is ATP synthase epsilon chain (141 aa).

It belongs to the ATPase epsilon chain family. As to quaternary structure, F-type ATPases have 2 components, CF(1) - the catalytic core - and CF(0) - the membrane proton channel. CF(1) has five subunits: alpha(3), beta(3), gamma(1), delta(1), epsilon(1). CF(0) has three main subunits: a, b and c.

The protein resides in the cell inner membrane. In terms of biological role, produces ATP from ADP in the presence of a proton gradient across the membrane. This is ATP synthase epsilon chain from Bordetella petrii (strain ATCC BAA-461 / DSM 12804 / CCUG 43448).